The primary structure comprises 60 residues: Movement protein TGBp3 (60 aa).

The Lumenal segment spans residues 1–6; it reads MHYIDW. The chain crosses the membrane as a helical span at residues 7–23; that stretch reads VILLTFAAALIVCLTPK. The Cytoplasmic segment spans residues 24 to 60; the sequence is PEPCIITVSGASATVSNCPNPELLTDLVKALKPAKPV.

Belongs to the Tymovirales TGBp3 protein family.

Its subcellular location is the host endoplasmic reticulum membrane. Functionally, plays a role in viral cell-to-cell propagation, by facilitating genome transport to neighboring plant cells through plasmosdesmata. May induce the formation of granular vesicles derived from the Endoplasmic reticulum, which align on actin filaments. This chain is Movement protein TGBp3, found in Citrus (ICRSV).